We begin with the raw amino-acid sequence, 510 residues long: tRNA-2-methylthio-N(6)-dimethylallyladenosine synthase (510 aa).

One can recognise an MTTase N-terminal domain in the interval 19 to 135; the sequence is RTFEVRTYGC…LPALLDRARH (117 aa). Residues Cys-28, Cys-64, Cys-98, Cys-172, Cys-176, and Cys-179 each coordinate [4Fe-4S] cluster. Positions 158–394 constitute a Radical SAM core domain; sequence RESSYAAWVS…IELQERISLE (237 aa). In terms of domain architecture, TRAM spans 397-467; that stretch reads TAQIGRRVEL…PHHLIADAGL (71 aa). The disordered stretch occupies residues 477-510; that stretch reads DAHAAGQKPRTGVGLGMPAVGAPDPLPATTGCAR.

This sequence belongs to the methylthiotransferase family. MiaB subfamily. In terms of assembly, monomer. The cofactor is [4Fe-4S] cluster.

It localises to the cytoplasm. The enzyme catalyses N(6)-dimethylallyladenosine(37) in tRNA + (sulfur carrier)-SH + AH2 + 2 S-adenosyl-L-methionine = 2-methylsulfanyl-N(6)-dimethylallyladenosine(37) in tRNA + (sulfur carrier)-H + 5'-deoxyadenosine + L-methionine + A + S-adenosyl-L-homocysteine + 2 H(+). Catalyzes the methylthiolation of N6-(dimethylallyl)adenosine (i(6)A), leading to the formation of 2-methylthio-N6-(dimethylallyl)adenosine (ms(2)i(6)A) at position 37 in tRNAs that read codons beginning with uridine. The polypeptide is tRNA-2-methylthio-N(6)-dimethylallyladenosine synthase (Mycolicibacterium vanbaalenii (strain DSM 7251 / JCM 13017 / BCRC 16820 / KCTC 9966 / NRRL B-24157 / PYR-1) (Mycobacterium vanbaalenii)).